Reading from the N-terminus, the 258-residue chain is Proteasome subunit alpha type-3 (258 aa).

Residues Lys-100, Lys-199, and Lys-231 each participate in a glycyl lysine isopeptide (Lys-Gly) (interchain with G-Cter in ubiquitin) cross-link.

This sequence belongs to the peptidase T1A family. As to quaternary structure, the 26S proteasome consists of a 20S proteasome core and two 19S regulatory subunits. The 20S proteasome core is composed of 28 subunits that are arranged in four stacked rings, resulting in a barrel-shaped structure. The two end rings are each formed by seven alpha subunits, and the two central rings are each formed by seven beta subunits. The catalytic chamber with the active sites is on the inside of the barrel.

The protein resides in the cytoplasm. It localises to the nucleus. The proteasome degrades poly-ubiquitinated proteins in the cytoplasm and in the nucleus. It is essential for the regulated turnover of proteins and for the removal of misfolded proteins. The proteasome is a multicatalytic proteinase complex that is characterized by its ability to cleave peptides with Arg, Phe, Tyr, Leu, and Glu adjacent to the leaving group at neutral or slightly basic pH. It has an ATP-dependent proteolytic activity. The chain is Proteasome subunit alpha type-3 (PRE9) from Saccharomyces cerevisiae (strain ATCC 204508 / S288c) (Baker's yeast).